Here is a 297-residue protein sequence, read N- to C-terminus: Ribosomal RNA small subunit methyltransferase H (297 aa).

S-adenosyl-L-methionine is bound by residues 37 to 39, Glu56, Phe87, Asp102, and His109; that span reads GGH.

Belongs to the methyltransferase superfamily. RsmH family.

Its subcellular location is the cytoplasm. It carries out the reaction cytidine(1402) in 16S rRNA + S-adenosyl-L-methionine = N(4)-methylcytidine(1402) in 16S rRNA + S-adenosyl-L-homocysteine + H(+). Specifically methylates the N4 position of cytidine in position 1402 (C1402) of 16S rRNA. The polypeptide is Ribosomal RNA small subunit methyltransferase H (Borrelia recurrentis (strain A1)).